A 977-amino-acid chain; its full sequence is DNA-directed RNA polymerase 3B, chloroplastic (977 aa).

Residues 1–71 constitute a chloroplast transit peptide; that stretch reads MASTASYSPS…NNIQSQTTVC (71 aa). Catalysis depends on residues D678, K753, and D910.

This sequence belongs to the phage and mitochondrial RNA polymerase family.

The protein localises to the plastid. It is found in the chloroplast. It carries out the reaction RNA(n) + a ribonucleoside 5'-triphosphate = RNA(n+1) + diphosphate. DNA-dependent RNA polymerase catalyzes the transcription of DNA into RNA using the four ribonucleoside triphosphates as substrates. This is DNA-directed RNA polymerase 3B, chloroplastic (RPOT3-TOM) from Nicotiana tabacum (Common tobacco).